The sequence spans 237 residues: MRPSERTANQIRPVTFTRNYTLHAEGSVLVEFGNTKVLCTATVESGVPRFMKGQGKGWINAEYGMLPRATHTRNAREAARGKQGGRTMEIQRLIARALRAAVDLKALGENTITIDCDVIQADGGTRTASISGACVALVDALTHMRAKGMINSNPLKYMIAAISVGIYKGQAISDLEYIEDSAAETDMNVILTETGKIIEIQGTAEGEPFSFDELDELLTLAKHSIREIIDVQKQALA.

Residues Arg-86 and 124 to 126 contribute to the phosphate site; that span reads GTR.

This sequence belongs to the RNase PH family. In terms of assembly, homohexameric ring arranged as a trimer of dimers.

It carries out the reaction tRNA(n+1) + phosphate = tRNA(n) + a ribonucleoside 5'-diphosphate. Functionally, phosphorolytic 3'-5' exoribonuclease that plays an important role in tRNA 3'-end maturation. Removes nucleotide residues following the 3'-CCA terminus of tRNAs; can also add nucleotides to the ends of RNA molecules by using nucleoside diphosphates as substrates, but this may not be physiologically important. Probably plays a role in initiation of 16S rRNA degradation (leading to ribosome degradation) during starvation. The chain is Ribonuclease PH from Pseudoalteromonas translucida (strain TAC 125).